Consider the following 400-residue polypeptide: Malonyl CoA-acyl carrier protein transacylase (400 aa).

Active-site residues include Ser92 and His201.

This sequence belongs to the FabD family.

The catalysed reaction is holo-[ACP] + malonyl-CoA = malonyl-[ACP] + CoA. Functionally, is involved in the mycosubtilin synthetase assembly, by catalyzing the transfer of malonyl groups to a specific acyl-carrier-protein domain on MycA. The polypeptide is Malonyl CoA-acyl carrier protein transacylase (fenF) (Bacillus subtilis).